The sequence spans 287 residues: Survival motor neuron protein (287 aa).

The interval 1–28 (MGGGGGGFPEPEDSVLFRRGTGESDDSD) is disordered. Positions 9 to 40 (PEPEDSVLFRRGTGESDDSDVWDDTALIKAYD) are P1 (binding site for GEMIN2). Threonine 21 carries the post-translational modification Phosphothreonine. Phosphoserine is present on residues serine 24 and serine 27. A Glycyl lysine isopeptide (Lys-Gly) (interchain with G-Cter in SUMO2) cross-link involves residue lysine 47. Disordered regions lie at residues 51–86 (KNGD…PSKQ) and 149–221 (NAQE…PPPH). The span at 64–77 (GTPKRKSAKNKSQR) shows a compositional bias: basic residues. A Phosphothreonine modification is found at threonine 65. Threonine 80 carries the post-translational modification Phosphothreonine; by PKA. The region spanning 86-146 (QWKVGDNCCA…LSPTSEVANI (61 aa)) is the Tudor domain. Positions 92-204 (NCCAIWSEDG…MPRSGLGPGK (113 aa)) are required for interaction with RPP20/POP7. Positions 149-160 (NAQENENESQIS) are enriched in low complexity. Over residues 167–179 (SSRSPLNKPNNIR) the composition is skewed to polar residues. Lysine 204 participates in a covalent cross-link: Glycyl lysine isopeptide (Lys-Gly) (interchain with G-Cter in SUMO2). Residues 211–221 (GPPPPPPPPPH) show a composition bias toward pro residues. The P2 (binding site for SM B) stretch occupies residues 234-261 (PPMIPPPPPICPDSLDDADALGSMLISW). The required for interaction with SYNCRIP stretch occupies residues 273-287 (GFKQSQKEGRYSHFN).

Belongs to the SMN family. Homooligomer; may form higher order homooligomers in the dimer to octamer range. Part of the core SMN complex that contains SMN1, GEMIN2/SIP1, DDX20/GEMIN3, GEMIN4, GEMIN5, GEMIN6, GEMIN7, GEMIN8 and STRAP/UNRIP. Part of the SMN-Sm complex that contains SMN1, GEMIN2/SIP1, DDX20/GEMIN3, GEMIN4, GEMIN5, GEMIN6, GEMIN7, GEMIN8, STRAP/UNRIP and the Sm proteins SNRPB, SNRPD1, SNRPD2, SNRPD3, SNRPE, SNRPF and SNRPG. Component of an import snRNP complex composed of KPNB1, RNUT1, SMN1 and ZNF259. Interacts with DDX20, FBL, NOLA1, RNUT1, SYNCRIP and with several spliceosomal snRNP core Sm proteins, including SNRPB, SNRPD1, SNRPD2, SNRPD3, SNRPE and ILF3. Interacts with GEMIN2; the interaction is direct. Interacts with GEMIN3; the interaction is direct. Interacts with GEMIN8; the interaction is direct. Interacts with SNRPB; the interaction is direct. Interacts (via Tudor domain) with SNRPD1 (via C-terminus); the interaction is direct. Interacts with SNRPD2; the interaction is direct. Interacts (via Tudor domain) with SNRPD3 (via C-terminus); the interaction is direct. Interacts with SNRPE; the interaction is direct. Interacts with OSTF1, LSM10, LSM11 and RPP20/POP7. Interacts (via C-terminal region) with ZPR1 (via C-terminal region). Interacts (via Tudor domain) with COIL. Interacts with SETX; recruits SETX to POLR2A. Interacts with POLR2A (via the C-terminal domain (CTD)). Interacts with PRMT5. Interacts with XRN2. Interacts (via C-terminus) with FMR1 (via C-terminus); the interaction is direct and occurs in a RNA-independent manner. Interacts (via Tudor domain) with SF3B2 ('Arg-508'-methylated form). Interacts with WRAP53/TCAB1. Interacts (via Tudor domain) with ELAVL4 in an RNA-independent manner; the interaction is required for localization of ELAVL4 to RNA granules. Interacts with FRG1.

It is found in the nucleus. It localises to the gem. Its subcellular location is the cajal body. The protein resides in the cytoplasm. The protein localises to the cytoplasmic granule. It is found in the perikaryon. It localises to the cell projection. Its subcellular location is the neuron projection. The protein resides in the axon. The protein localises to the myofibril. It is found in the sarcomere. It localises to the z line. In terms of biological role, the SMN complex catalyzes the assembly of small nuclear ribonucleoproteins (snRNPs), the building blocks of the spliceosome, and thereby plays an important role in the splicing of cellular pre-mRNAs. Most spliceosomal snRNPs contain a common set of Sm proteins SNRPB, SNRPD1, SNRPD2, SNRPD3, SNRPE, SNRPF and SNRPG that assemble in a heptameric protein ring on the Sm site of the small nuclear RNA to form the core snRNP (Sm core). In the cytosol, the Sm proteins SNRPD1, SNRPD2, SNRPE, SNRPF and SNRPG are trapped in an inactive 6S pICln-Sm complex by the chaperone CLNS1A that controls the assembly of the core snRNP. To assemble core snRNPs, the SMN complex accepts the trapped 5Sm proteins from CLNS1A forming an intermediate. Binding of snRNA inside 5Sm ultimately triggers eviction of the SMN complex, thereby allowing binding of SNRPD3 and SNRPB to complete assembly of the core snRNP. Within the SMN complex, SMN1 acts as a structural backbone and together with GEMIN2 it gathers the Sm complex subunits. Ensures the correct splicing of U12 intron-containing genes that may be important for normal motor and proprioceptive neurons development. Also required for resolving RNA-DNA hybrids created by RNA polymerase II, that form R-loop in transcription terminal regions, an important step in proper transcription termination. May also play a role in the metabolism of small nucleolar ribonucleoprotein (snoRNPs). In Bos taurus (Bovine), this protein is Survival motor neuron protein (SMN1).